The chain runs to 466 residues: Ribulose bisphosphate carboxylase large chain (466 aa).

At Lys-5 the chain carries N6,N6,N6-trimethyllysine. Substrate contacts are provided by Asn-114 and Thr-164. Catalysis depends on Lys-166, which acts as the Proton acceptor. Residue Lys-168 participates in substrate binding. 3 residues coordinate Mg(2+): Lys-192, Asp-194, and Glu-195. At Lys-192 the chain carries N6-carboxylysine. His-285 acts as the Proton acceptor in catalysis. Substrate contacts are provided by Arg-286, His-318, and Ser-370.

It belongs to the RuBisCO large chain family. Type I subfamily. As to quaternary structure, heterohexadecamer of 8 large chains and 8 small chains; disulfide-linked. The disulfide link is formed within the large subunit homodimers. Mg(2+) serves as cofactor. Post-translationally, the disulfide bond which can form in the large chain dimeric partners within the hexadecamer appears to be associated with oxidative stress and protein turnover.

The protein resides in the plastid. It localises to the chloroplast. The catalysed reaction is 2 (2R)-3-phosphoglycerate + 2 H(+) = D-ribulose 1,5-bisphosphate + CO2 + H2O. It carries out the reaction D-ribulose 1,5-bisphosphate + O2 = 2-phosphoglycolate + (2R)-3-phosphoglycerate + 2 H(+). Its function is as follows. RuBisCO catalyzes two reactions: the carboxylation of D-ribulose 1,5-bisphosphate, the primary event in carbon dioxide fixation, as well as the oxidative fragmentation of the pentose substrate in the photorespiration process. Both reactions occur simultaneously and in competition at the same active site. The protein is Ribulose bisphosphate carboxylase large chain of Isophysis tasmanica.